The sequence spans 203 residues: Holliday junction branch migration complex subunit RuvA (203 aa).

A domain I region spans residues 1-64 (MIGRLNGILV…EDAQLLYGFI (64 aa)). The domain II stretch occupies residues 65 to 143 (TKQERALFRL…SLLEASVGNE (79 aa)). Residues 144-154 (REFMLQTNYTA) are flexible linker. The tract at residues 155–203 (PAANAEEDAISALVSLGYKPPQASRAVSKAYKEGMDTETLIKLALKSML) is domain III.

Belongs to the RuvA family. As to quaternary structure, homotetramer. Forms an RuvA(8)-RuvB(12)-Holliday junction (HJ) complex. HJ DNA is sandwiched between 2 RuvA tetramers; dsDNA enters through RuvA and exits via RuvB. An RuvB hexamer assembles on each DNA strand where it exits the tetramer. Each RuvB hexamer is contacted by two RuvA subunits (via domain III) on 2 adjacent RuvB subunits; this complex drives branch migration. In the full resolvosome a probable DNA-RuvA(4)-RuvB(12)-RuvC(2) complex forms which resolves the HJ.

It is found in the cytoplasm. The RuvA-RuvB-RuvC complex processes Holliday junction (HJ) DNA during genetic recombination and DNA repair, while the RuvA-RuvB complex plays an important role in the rescue of blocked DNA replication forks via replication fork reversal (RFR). RuvA specifically binds to HJ cruciform DNA, conferring on it an open structure. The RuvB hexamer acts as an ATP-dependent pump, pulling dsDNA into and through the RuvAB complex. HJ branch migration allows RuvC to scan DNA until it finds its consensus sequence, where it cleaves and resolves the cruciform DNA. The polypeptide is Holliday junction branch migration complex subunit RuvA (Shewanella denitrificans (strain OS217 / ATCC BAA-1090 / DSM 15013)).